Consider the following 291-residue polypeptide: Ribosomal RNA small subunit methyltransferase A (291 aa).

S-adenosyl-L-methionine-binding residues include His-21, Leu-23, Gly-48, Glu-70, Asp-95, and Asn-115.

Belongs to the class I-like SAM-binding methyltransferase superfamily. rRNA adenine N(6)-methyltransferase family. RsmA subfamily.

The protein localises to the cytoplasm. It carries out the reaction adenosine(1518)/adenosine(1519) in 16S rRNA + 4 S-adenosyl-L-methionine = N(6)-dimethyladenosine(1518)/N(6)-dimethyladenosine(1519) in 16S rRNA + 4 S-adenosyl-L-homocysteine + 4 H(+). Its function is as follows. Specifically dimethylates two adjacent adenosines (A1518 and A1519) in the loop of a conserved hairpin near the 3'-end of 16S rRNA in the 30S particle. May play a critical role in biogenesis of 30S subunits. The chain is Ribosomal RNA small subunit methyltransferase A from Prochlorococcus marinus (strain NATL2A).